Reading from the N-terminus, the 146-residue chain is Probable actin-related protein 2/3 complex subunit 5 (146 aa).

This sequence belongs to the ARPC5 family. Component of the Arp2/3 complex composed of ARP2, ARP3, ARPC1B/p41-ARC, ARPC2/p34-ARC, ARPC3/p21-ARC, ARPC4/p20-ARC and ARPC5/p16-ARC.

It localises to the cytoplasm. Its subcellular location is the cytoskeleton. Functions as a component of the Arp2/3 complex which is involved in regulation of actin polymerization and together with an activating nucleation-promoting factor (NPF) mediates the formation of branched actin networks. The chain is Probable actin-related protein 2/3 complex subunit 5 from Caenorhabditis elegans.